A 353-amino-acid polypeptide reads, in one-letter code: Phosphate acyltransferase (353 aa).

Belongs to the PlsX family. In terms of assembly, homodimer. Probably interacts with PlsY.

It is found in the cytoplasm. It carries out the reaction a fatty acyl-[ACP] + phosphate = an acyl phosphate + holo-[ACP]. The protein operates within lipid metabolism; phospholipid metabolism. Catalyzes the reversible formation of acyl-phosphate (acyl-PO(4)) from acyl-[acyl-carrier-protein] (acyl-ACP). This enzyme utilizes acyl-ACP as fatty acyl donor, but not acyl-CoA. The protein is Phosphate acyltransferase of Rhodopseudomonas palustris (strain BisB18).